Consider the following 159-residue polypeptide: Ribosomal RNA large subunit methyltransferase H (159 aa).

Residues L76, G108, and 127-132 (FSRMTF) contribute to the S-adenosyl-L-methionine site.

The protein belongs to the RNA methyltransferase RlmH family. Homodimer.

Its subcellular location is the cytoplasm. It carries out the reaction pseudouridine(1915) in 23S rRNA + S-adenosyl-L-methionine = N(3)-methylpseudouridine(1915) in 23S rRNA + S-adenosyl-L-homocysteine + H(+). Functionally, specifically methylates the pseudouridine at position 1915 (m3Psi1915) in 23S rRNA. The sequence is that of Ribosomal RNA large subunit methyltransferase H from Clostridioides difficile (strain 630) (Peptoclostridium difficile).